We begin with the raw amino-acid sequence, 878 residues long: Phosphoenolpyruvate carboxylase (878 aa).

Active-site residues include His140 and Lys545.

This sequence belongs to the PEPCase type 1 family. Mg(2+) is required as a cofactor.

It catalyses the reaction oxaloacetate + phosphate = phosphoenolpyruvate + hydrogencarbonate. Functionally, forms oxaloacetate, a four-carbon dicarboxylic acid source for the tricarboxylic acid cycle. This is Phosphoenolpyruvate carboxylase from Pseudomonas syringae pv. syringae (strain B728a).